The sequence spans 153 residues: Suppressor of RNA silencing (153 aa).

The tract at residues 1–23 (MMATFSCVCCGTSTTSTYCGKRC) is C-1. Residues 1-85 (MMATFSCVCC…IVSRFCGQKH (85 aa)) are interaction with TGB1. The segment at 19–47 (CGKRCERKHVYSETRNKRLELYKKYLLEP) is basic motif (BM). Positions 60–85 (CGMPCSIAEEACDQLPIVSRFCGQKH) are C-2. The interaction with replication protein alpha-A stretch occupies residues 86–127 (ADLYDSLLKRSEQELLLEFLQKKMQELKLSHIVKMAKLESEV). Positions 92 to 132 (LLKRSEQELLLEFLQKKMQELKLSHIVKMAKLESEVNAIRK) form a coiled coil. Serine 96 carries the post-translational modification Phosphoserine.

Belongs to the virgaviridae suppressor of RNA silencing family. Homooligomer. Interacts (via C-terminus) with replication protein alpha-A. Interacts (via N-terminus) with the movement protein TGB1; this interaction targets gammab-TGB1 at the periphery of chloroplasts and plasmodesmata. Interacts with host autophagy protein ATG7; this interaction disrupts the host ATG7-ATG8 interaction to promote viral infection. Interacts (via BM region) with host STY46; this interaction inhibits the viral infection. In terms of processing, phosphorylated at Ser-96 by a host PKA-like kinase; the phosphorylation at this site seems to suppress host cell death. Post-translationally, serine-phosphorylated by host STY46 kinase.

It is found in the host chloroplast envelope. The protein resides in the host endoplasmic reticulum. Its subcellular location is the host cell junction. It localises to the host plasmodesma. Suppressor of RNA-mediated gene silencing, also known as post-transcriptional gene silencing (PTGS), a mechanism of plant viral defense that limits the accumulation of viral RNAs. Promotes viral cell-to-cell long distance movement by enhancing the ATPase activity of TGB1. Enhances RNA helicase activity of replication protein alpha-A. Suppresses autophagy induced by the host as a defense mechanism against viral infection. The protein is Suppressor of RNA silencing of Barley stripe mosaic virus (BSMV).